The sequence spans 590 residues: Ras-specific guanine nucleotide-releasing factor RalGPS2 (590 aa).

Positions 49–287 (TPEEYAGQIT…YKLSLKIEPG (239 aa)) constitute a Ras-GEF domain. Residues 288–319 (ASTPRSAASREDLAGPDIGASPQGGRKSSAAA) form a disordered region. Phosphoserine occurs at positions 293, 296, and 308. The short motif at 331 to 334 (PQTP) is the PXXP element. Threonine 333 carries the phosphothreonine modification. A phosphoserine mark is found at serine 336 and serine 350. Position 368 is a phosphothreonine (threonine 368). The tract at residues 380 to 413 (DSVMEPHAPSRGQAESSTLSSGISIGSSDGSELS) is disordered. The residue at position 381 (serine 381) is a Phosphoserine. The span at 394 to 410 (ESSTLSSGISIGSSDGS) shows a compositional bias: low complexity. Phosphoserine is present on serine 429. Residues 464–576 (AVTIQGVLRR…WFKHLSAACQ (113 aa)) form the PH domain. The segment at 466-590 (TIQGVLRRKT…QVPTNLMTFE (125 aa)) is required for stimulation of nucleotide exchange by RALA.

As to quaternary structure, interacts with RALA. Interacts with the SH3 domains of GRB2 and PLCG1. Abundant in brain and testis.

It localises to the cytoplasm. The protein localises to the cell membrane. Functionally, guanine nucleotide exchange factor for the small GTPase RALA. May be involved in cytoskeletal organization. May also be involved in the stimulation of transcription in a Ras-independent fashion. The protein is Ras-specific guanine nucleotide-releasing factor RalGPS2 (Ralgps2) of Mus musculus (Mouse).